The chain runs to 290 residues: Acetyl-coenzyme A carboxylase carboxyl transferase subunit beta (290 aa).

Residues 27–290 form the CoA carboxyltransferase N-terminal domain; it reads LWHKCPSCEA…FTHSPSPVSA (264 aa). Residues Cys-31, Cys-34, Cys-50, and Cys-53 each contribute to the Zn(2+) site. The segment at 31 to 53 adopts a C4-type zinc-finger fold; sequence CPSCEAVLYRPELEKTLDVCPKC.

The protein belongs to the AccD/PCCB family. In terms of assembly, acetyl-CoA carboxylase is a heterohexamer composed of biotin carboxyl carrier protein (AccB), biotin carboxylase (AccC) and two subunits each of ACCase subunit alpha (AccA) and ACCase subunit beta (AccD). The cofactor is Zn(2+).

It localises to the cytoplasm. It catalyses the reaction N(6)-carboxybiotinyl-L-lysyl-[protein] + acetyl-CoA = N(6)-biotinyl-L-lysyl-[protein] + malonyl-CoA. It participates in lipid metabolism; malonyl-CoA biosynthesis; malonyl-CoA from acetyl-CoA: step 1/1. Component of the acetyl coenzyme A carboxylase (ACC) complex. Biotin carboxylase (BC) catalyzes the carboxylation of biotin on its carrier protein (BCCP) and then the CO(2) group is transferred by the transcarboxylase to acetyl-CoA to form malonyl-CoA. This chain is Acetyl-coenzyme A carboxylase carboxyl transferase subunit beta, found in Pseudomonas aeruginosa (strain UCBPP-PA14).